Reading from the N-terminus, the 196-residue chain is Pyridoxal 5'-phosphate synthase subunit PdxT (196 aa).

Position 47-49 (47-49 (GES)) interacts with L-glutamine. The active-site Nucleophile is C79. Residues R106 and 134–135 (IR) each bind L-glutamine. Catalysis depends on charge relay system residues H170 and E172.

It belongs to the glutaminase PdxT/SNO family. In terms of assembly, in the presence of PdxS, forms a dodecamer of heterodimers. Only shows activity in the heterodimer.

The enzyme catalyses aldehydo-D-ribose 5-phosphate + D-glyceraldehyde 3-phosphate + L-glutamine = pyridoxal 5'-phosphate + L-glutamate + phosphate + 3 H2O + H(+). The catalysed reaction is L-glutamine + H2O = L-glutamate + NH4(+). It functions in the pathway cofactor biosynthesis; pyridoxal 5'-phosphate biosynthesis. Its function is as follows. Catalyzes the hydrolysis of glutamine to glutamate and ammonia as part of the biosynthesis of pyridoxal 5'-phosphate. The resulting ammonia molecule is channeled to the active site of PdxS. This Bacillus cereus (strain ZK / E33L) protein is Pyridoxal 5'-phosphate synthase subunit PdxT.